The sequence spans 63 residues: Large ribosomal subunit protein uL29 (63 aa).

It belongs to the universal ribosomal protein uL29 family.

This Aeromonas salmonicida (strain A449) protein is Large ribosomal subunit protein uL29.